The following is a 678-amino-acid chain: DNA gyrase subunit B (678 aa).

One can recognise a Toprim domain in the interval Ser-456–Pro-570. Residues Glu-462, Asp-535, and Asp-537 each contribute to the Mg(2+) site.

It belongs to the type II topoisomerase GyrB family. In terms of assembly, heterotetramer, composed of two GyrA and two GyrB chains. In the heterotetramer, GyrA contains the active site tyrosine that forms a transient covalent intermediate with the DNA, while GyrB binds cofactors catalyzes ATP hydrolysis. Mg(2+) serves as cofactor. Mn(2+) is required as a cofactor. It depends on Ca(2+) as a cofactor.

The protein localises to the cytoplasm. The enzyme catalyses ATP-dependent breakage, passage and rejoining of double-stranded DNA.. DNA supercoiling is inhibited by fluoroquinolones; IC(50) 1 ug/ml for sitafloxacin. In terms of biological role, a type II topoisomerase that negatively supercoils closed circular double-stranded (ds) DNA in an ATP-dependent manner to modulate DNA topology and maintain chromosomes in an underwound state. Negative supercoiling favors strand separation, and DNA replication, transcription, recombination and repair, all of which involve strand separation. Also able to catalyze the interconversion of other topological isomers of dsDNA rings, including catenanes and knotted rings. Type II topoisomerases break and join 2 DNA strands simultaneously in an ATP-dependent manner. The protein is DNA gyrase subunit B of Mycobacterium leprae (strain TN).